Consider the following 413-residue polypeptide: Cell division protein FtsA (413 aa).

The protein belongs to the FtsA/MreB family. Self-interacts. Interacts with FtsZ.

It is found in the cell inner membrane. Cell division protein that is involved in the assembly of the Z ring. May serve as a membrane anchor for the Z ring. This is Cell division protein FtsA from Borreliella burgdorferi (strain ATCC 35210 / DSM 4680 / CIP 102532 / B31) (Borrelia burgdorferi).